Consider the following 64-residue polypeptide: Large ribosomal subunit protein eL37 (64 aa).

The Zn(2+) site is built by Cys-20, Cys-23, Cys-35, and Cys-38. The C4-type zinc finger occupies 20–38 (CRRCGRRAFHVRKKVCAAC).

This sequence belongs to the eukaryotic ribosomal protein eL37 family. It depends on Zn(2+) as a cofactor.

Functionally, binds to the 23S rRNA. The protein is Large ribosomal subunit protein eL37 of Methanococcus maripaludis (strain DSM 14266 / JCM 13030 / NBRC 101832 / S2 / LL).